We begin with the raw amino-acid sequence, 276 residues long: Vitamin B12-binding protein (276 aa).

The signal sequence occupies residues 1–20; the sequence is MIVRFLCWLTGLLLCTAAYA. Positions 24–273 constitute a Fe/B12 periplasmic-binding domain; the sequence is RVISLAPHAT…QLTALSPGSS (250 aa). Cysteines 186 and 262 form a disulfide.

It belongs to the BtuF family. As to quaternary structure, the complex is composed of two ATP-binding proteins (BtuD), two transmembrane proteins (BtuC) and a solute-binding protein (BtuF).

Its subcellular location is the periplasm. Part of the ABC transporter complex BtuCDF involved in vitamin B12 import. Binds vitamin B12 and delivers it to the periplasmic surface of BtuC. This is Vitamin B12-binding protein from Pectobacterium carotovorum subsp. carotovorum (strain PC1).